Here is a 111-residue protein sequence, read N- to C-terminus: Large ribosomal subunit protein eL31 (111 aa).

This sequence belongs to the eukaryotic ribosomal protein eL31 family.

This Encephalitozoon cuniculi (strain GB-M1) (Microsporidian parasite) protein is Large ribosomal subunit protein eL31 (RPL31).